The chain runs to 813 residues: Ribosome-releasing factor 2, mitochondrial (813 aa).

The transit peptide at 1-20 directs the protein to the mitochondrion; the sequence is MLRIVWKPLKIRLPVWRRYQ. Residues 26–314 enclose the tr-type G domain; the sequence is NSIRNVGIIA…AIIDYLPSPV (289 aa). Residues 35–42, 99–103, and 153–156 each bind GTP; these read AHIDAGKT, DTPGH, and NKMD.

This sequence belongs to the TRAFAC class translation factor GTPase superfamily. Classic translation factor GTPase family. EF-G/EF-2 subfamily.

Its subcellular location is the mitochondrion. Functionally, mitochondrial GTPase that mediates the disassembly of ribosomes from messenger RNA at the termination of mitochondrial protein biosynthesis. Not involved in the GTP-dependent ribosomal translocation step during translation elongation. The sequence is that of Ribosome-releasing factor 2, mitochondrial (mef2) from Schizosaccharomyces pombe (strain 972 / ATCC 24843) (Fission yeast).